A 576-amino-acid chain; its full sequence is A-type ATP synthase subunit A (576 aa).

G228–T235 is a binding site for ATP.

It belongs to the ATPase alpha/beta chains family. Has multiple subunits with at least A(3), B(3), C, D, E, F, H, I and proteolipid K(x).

Its subcellular location is the cell membrane. It catalyses the reaction ATP + H2O + 4 H(+)(in) = ADP + phosphate + 5 H(+)(out). Component of the A-type ATP synthase that produces ATP from ADP in the presence of a proton gradient across the membrane. The A chain is the catalytic subunit. This is A-type ATP synthase subunit A from Methanothrix thermoacetophila (strain DSM 6194 / JCM 14653 / NBRC 101360 / PT) (Methanosaeta thermophila).